A 144-amino-acid polypeptide reads, in one-letter code: MKILVINGPNINFLGIREKEIYGEGTYEDLCKFIKDEGSKIGIEVEVMQSNIEGEIINFLQAAYNKVDGIVINPGAYTHYSIAIYDAIKSINIPTVEVHISNIHTREEYRRKSVTAPACIGQICGFGFYGYVMGITALKNMLSK.

Y22 acts as the Proton acceptor in catalysis. Substrate contacts are provided by N73, H79, and D86. The Proton donor role is filled by H99. Residues 100–101 (IS) and R110 each bind substrate.

This sequence belongs to the type-II 3-dehydroquinase family. As to quaternary structure, homododecamer.

It catalyses the reaction 3-dehydroquinate = 3-dehydroshikimate + H2O. The protein operates within metabolic intermediate biosynthesis; chorismate biosynthesis; chorismate from D-erythrose 4-phosphate and phosphoenolpyruvate: step 3/7. Catalyzes a trans-dehydration via an enolate intermediate. The polypeptide is 3-dehydroquinate dehydratase (Clostridium acetobutylicum (strain ATCC 824 / DSM 792 / JCM 1419 / IAM 19013 / LMG 5710 / NBRC 13948 / NRRL B-527 / VKM B-1787 / 2291 / W)).